We begin with the raw amino-acid sequence, 351 residues long: Nicotinate-nucleotide--dimethylbenzimidazole phosphoribosyltransferase (351 aa).

The active-site Proton acceptor is the Glu317.

This sequence belongs to the CobT family.

It catalyses the reaction 5,6-dimethylbenzimidazole + nicotinate beta-D-ribonucleotide = alpha-ribazole 5'-phosphate + nicotinate + H(+). Its pathway is nucleoside biosynthesis; alpha-ribazole biosynthesis; alpha-ribazole from 5,6-dimethylbenzimidazole: step 1/2. Catalyzes the synthesis of alpha-ribazole-5'-phosphate from nicotinate mononucleotide (NAMN) and 5,6-dimethylbenzimidazole (DMB). The chain is Nicotinate-nucleotide--dimethylbenzimidazole phosphoribosyltransferase from Pseudomonas fluorescens (strain SBW25).